We begin with the raw amino-acid sequence, 464 residues long: Argininosuccinate lyase (464 aa).

This sequence belongs to the lyase 1 family. Argininosuccinate lyase subfamily.

It localises to the cytoplasm. It catalyses the reaction 2-(N(omega)-L-arginino)succinate = fumarate + L-arginine. It functions in the pathway amino-acid biosynthesis; L-arginine biosynthesis; L-arginine from L-ornithine and carbamoyl phosphate: step 3/3. This Pseudomonas putida (strain GB-1) protein is Argininosuccinate lyase.